The following is a 345-amino-acid chain: Phosphoribosylformylglycinamidine cyclo-ligase (345 aa).

The protein belongs to the AIR synthase family.

Its subcellular location is the cytoplasm. It carries out the reaction 2-formamido-N(1)-(5-O-phospho-beta-D-ribosyl)acetamidine + ATP = 5-amino-1-(5-phospho-beta-D-ribosyl)imidazole + ADP + phosphate + H(+). The protein operates within purine metabolism; IMP biosynthesis via de novo pathway; 5-amino-1-(5-phospho-D-ribosyl)imidazole from N(2)-formyl-N(1)-(5-phospho-D-ribosyl)glycinamide: step 2/2. This is Phosphoribosylformylglycinamidine cyclo-ligase from Actinobacillus succinogenes (strain ATCC 55618 / DSM 22257 / CCUG 43843 / 130Z).